The sequence spans 344 residues: 3,4-dihydroxy-2-butanone 4-phosphate synthase (344 aa).

Positions 1–202 are DHBP synthase; it reads MILKRVTEAL…VSDLISYRLE (202 aa). D-ribulose 5-phosphate is bound by residues 27 to 28, Asp-32, 139 to 143, and Glu-163; these read RE and RTGHT. Glu-28 contacts Mg(2+). His-142 provides a ligand contact to Mg(2+). The interval 203–344 is GTP cyclohydrolase II-like; the sequence is NESLLKMFCQ…GLKLVETISL (142 aa).

In the N-terminal section; belongs to the DHBP synthase family. This sequence in the C-terminal section; belongs to the GTP cyclohydrolase II family. It depends on Mg(2+) as a cofactor. The cofactor is Mn(2+).

The catalysed reaction is D-ribulose 5-phosphate = (2S)-2-hydroxy-3-oxobutyl phosphate + formate + H(+). It participates in cofactor biosynthesis; riboflavin biosynthesis; 2-hydroxy-3-oxobutyl phosphate from D-ribulose 5-phosphate: step 1/1. Its function is as follows. Catalyzes the conversion of D-ribulose 5-phosphate to formate and 3,4-dihydroxy-2-butanone 4-phosphate. This is 3,4-dihydroxy-2-butanone 4-phosphate synthase (ribB) from Helicobacter pylori (strain ATCC 700392 / 26695) (Campylobacter pylori).